A 336-amino-acid polypeptide reads, in one-letter code: Fructose-1,6-bisphosphatase class 1 (336 aa).

The Mg(2+) site is built by Glu-91, Asp-114, Leu-116, and Asp-117. Residues 117 to 120, Asn-210, Tyr-243, and Lys-273 contribute to the substrate site; that span reads DGSS. Glu-279 lines the Mg(2+) pocket.

It belongs to the FBPase class 1 family. In terms of assembly, homotetramer. Mg(2+) is required as a cofactor.

It is found in the cytoplasm. It catalyses the reaction beta-D-fructose 1,6-bisphosphate + H2O = beta-D-fructose 6-phosphate + phosphate. It functions in the pathway carbohydrate biosynthesis; gluconeogenesis. This is Fructose-1,6-bisphosphatase class 1 from Dichelobacter nodosus (strain VCS1703A).